The chain runs to 294 residues: Ribosomal RNA small subunit methyltransferase H (294 aa).

S-adenosyl-L-methionine is bound by residues 36–38 (GGH), Asp55, Phe82, Asp97, and Gln104. A disordered region spans residues 265 to 285 (KPTVATDDEQNRNPRSRSAKW).

This sequence belongs to the methyltransferase superfamily. RsmH family.

Its subcellular location is the cytoplasm. The catalysed reaction is cytidine(1402) in 16S rRNA + S-adenosyl-L-methionine = N(4)-methylcytidine(1402) in 16S rRNA + S-adenosyl-L-homocysteine + H(+). Functionally, specifically methylates the N4 position of cytidine in position 1402 (C1402) of 16S rRNA. In Synechococcus sp. (strain CC9902), this protein is Ribosomal RNA small subunit methyltransferase H.